The following is a 300-amino-acid chain: Ribosomal protein bS6--L-glutamate ligase (300 aa).

The ATP-grasp domain maps to 104–287 (MQLLARQGID…IAGKMIRWIE (184 aa)). ATP is bound by residues K141, 178 to 179 (EY), D187, and 211 to 213 (RSN). Mg(2+) contacts are provided by D248, E260, and N262. Mn(2+) contacts are provided by D248, E260, and N262.

Belongs to the RimK family. The cofactor is Mg(2+). Mn(2+) serves as cofactor.

An L-glutamate ligase that catalyzes the ATP-dependent post-translational addition of glutamate residues to the C-terminus of ribosomal protein bS6 (RpsF). Is also able to catalyze the synthesis of poly-alpha-glutamate in vitro, via ATP hydrolysis from unprotected glutamate as substrate. The number of glutamate residues added to either RpsF or to poly-alpha-glutamate changes with pH. This Escherichia fergusonii (strain ATCC 35469 / DSM 13698 / CCUG 18766 / IAM 14443 / JCM 21226 / LMG 7866 / NBRC 102419 / NCTC 12128 / CDC 0568-73) protein is Ribosomal protein bS6--L-glutamate ligase.